Consider the following 521-residue polypeptide: Zinc finger CCCH domain-containing protein 45 (521 aa).

Disordered regions lie at residues 28 to 60 (TEDS…GFEG), 142 to 185 (TPAI…PLCS), and 296 to 319 (SRSF…ISPP). Positions 34-43 (NVASQPQRHS) are enriched in polar residues. Residues 159–168 (EESSNSKVES) show a composition bias toward low complexity. Polar residues predominate over residues 170–185 (VTANKQGQLETKPLCS). A C3H1-type zinc finger spans residues 469–497 (NKIHQQCIYFGTANGCNMGDSCTYVHDRY).

This chain is Zinc finger CCCH domain-containing protein 45, found in Arabidopsis thaliana (Mouse-ear cress).